The following is a 279-amino-acid chain: MTQSVSLSDFIVKTEDGYMPSDRECIALDRYLSKEQKELRETFKDGKNDRAALRIKMFLCPSPSRRFTQHGVVPMREIKTNTDMPSTLWTLVTDWLLNLLQDEENQEMFEDFISSKFPDVLASADKLARFAQRLEDRKDVLRKNFGKAMNAFGACFWAIKPTFATEGKCNVVRASDDSIILEFQPVPEYFRCGKSKATFYKLYPLSDEQPVNGMLALKAVAGNQFFMYHGHGHIRTVPYHELLTLSNHSLVKIKKRSKTFLNHHSQLNVVVNFSICSME.

Residues 119-121 (DVL), Lys-201, and 229-231 (HGH) contribute to the ATP site. Residues 214–249 (MLALKAVAGNQFFMYHGHGHIRTVPYHELLTLSNHS) form an RNA-binding region. The active-site For NTPase and RTPase activities is the His-233. Arg-235 provides a ligand contact to ATP.

The protein belongs to the rotavirus NSP2 family. In terms of assembly, homooctamer. Interacts with VP1; this interaction is weak. Interacts with NSP5; this interaction leads to up-regulation of NSP5 phosphorylation and formation of viral factories. Requires Mg(2+) as cofactor.

The protein resides in the host cytoplasm. Its function is as follows. Participates in replication and packaging of the viral genome. Plays a crucial role, together with NSP5, in the formation of virus factories (viroplasms) which are large inclusions in the host cytoplasm where replication intermediates are assembled and viral RNA replication takes place. Displays ssRNA binding, NTPase, RNA triphosphatase (RTPase) and ATP-independent helix-unwinding activities. The unwinding activity may prepare and organize plus-strand RNAs for packaging and replication by removing interfering secondary structures. The RTPase activity plays a role in the removal of the gamma-phosphate from the rotavirus RNA minus strands of dsRNA genome segments. The protein is Non-structural protein 2 of Homo sapiens (Human).